Consider the following 453-residue polypeptide: Putative dipeptidase UREG_03382 (453 aa).

The disordered stretch occupies residues M1–R33. The chain crosses the membrane as a helical span at residues L41–S63. H95, D97, and E208 together coordinate Zn(2+). The cysteines at positions 147 and 223 are disulfide-linked. H221 lines the substrate pocket. Residues H265 and H286 each coordinate Zn(2+). Substrate-binding residues include R297 and D357. N-linked (GlcNAc...) asparagine glycans are attached at residues N370 and N443.

Belongs to the metallo-dependent hydrolases superfamily. Peptidase M19 family. It depends on Zn(2+) as a cofactor.

The protein resides in the membrane. The catalysed reaction is an L-aminoacyl-L-amino acid + H2O = 2 an L-alpha-amino acid. In terms of biological role, hydrolyzes a wide range of dipeptides. The sequence is that of Putative dipeptidase UREG_03382 from Uncinocarpus reesii (strain UAMH 1704).